Here is a 730-residue protein sequence, read N- to C-terminus: Elongation factor 2 (730 aa).

A tr-type G domain is found at Val19–Ile260. Residues Ala28–Thr35, Asp94–His98, and Asn148–Asp151 contribute to the GTP site. His596 is subject to Diphthamide.

Belongs to the TRAFAC class translation factor GTPase superfamily. Classic translation factor GTPase family. EF-G/EF-2 subfamily.

It localises to the cytoplasm. In terms of biological role, catalyzes the GTP-dependent ribosomal translocation step during translation elongation. During this step, the ribosome changes from the pre-translocational (PRE) to the post-translocational (POST) state as the newly formed A-site-bound peptidyl-tRNA and P-site-bound deacylated tRNA move to the P and E sites, respectively. Catalyzes the coordinated movement of the two tRNA molecules, the mRNA and conformational changes in the ribosome. This chain is Elongation factor 2 (fusA), found in Methanococcoides methylutens.